Consider the following 519-residue polypeptide: Serine/threonine-protein kinase RIO3 (519 aa).

Phosphoserine is present on residues Ser8 and Ser112. A disordered region spans residues 121–159; that stretch reads PYEDSDSSEDEVDWQDTRDDPYRPAKPVPTPKKGFIGKG. Phosphotyrosine is present on Tyr122. The segment covering 124 to 134 has biased composition (acidic residues); it reads DSDSSEDEVDW. Ser125, Ser127, and Ser128 each carry phosphoserine. Residues 251-519 enclose the Protein kinase domain; sequence ETITGCISTG…DGDPPLLYDE (269 aa). ATP contacts are provided by residues 257–265 and Lys290; that span reads ISTGKESVV. The active-site Proton acceptor is the Asp406.

The protein belongs to the protein kinase superfamily. RIO-type Ser/Thr kinase family. In terms of assembly, interacts with CASP10. Interacts with IRF3; RIOK3 probably mediates the interaction of TBK1 with IRF3. Associated with 40S pre-ribosomal particles. Requires Mg(2+) as cofactor. Post-translationally, autophosphorylated (in vitro). Widely expressed.

It is found in the cytoplasm. The catalysed reaction is L-seryl-[protein] + ATP = O-phospho-L-seryl-[protein] + ADP + H(+). It carries out the reaction L-threonyl-[protein] + ATP = O-phospho-L-threonyl-[protein] + ADP + H(+). Involved in regulation of type I interferon (IFN)-dependent immune response which plays a critical role in the innate immune response against DNA and RNA viruses. May act as an adapter protein essential for the recruitment of TBK1 to IRF3. Phosphorylates IFIH1 on 'Ser-828' interfering with IFIH1 filament assembly on long dsRNA and resulting in attenuated IFIH1-signaling. Can inhibit CASP10 isoform 7-mediated activation of the NF-kappaB signaling pathway. May play a role in the biogenesis of the 40S ribosomal subunit. Involved in the processing of 21S pre-rRNA to the mature 18S rRNA. The sequence is that of Serine/threonine-protein kinase RIO3 (RIOK3) from Homo sapiens (Human).